Here is a 503-residue protein sequence, read N- to C-terminus: WAS/WASL-interacting protein family member 1 (503 aa).

A compositionally biased stretch (pro residues) spans 1–14; it reads MPVPPPPAPPPPPT. Residues 1–503 are disordered; that stretch reads MPVPPPPAPP…GAPPLPPIPR (503 aa). Positions 21–31 are enriched in polar residues; the sequence is EKPTLNKTEQA. One can recognise a WH2 domain in the interval 32-49; it reads GRNALLSDISKGKKLKKT. An Asymmetric dimethylarginine modification is found at arginine 33. Positions 45 to 48 are binds actin; that stretch reads KLKK. The span at 65-104 shows a compositional bias: gly residues; the sequence is AGAGGGGGGFGGGGGFGGGGGGGGGGSFGGGGPPGLGGLF. A compositionally biased stretch (low complexity) spans 121–137; it reads SGGSRPPLLPPGGRSTS. Arginine 125 and arginine 134 each carry omega-N-methylarginine. 4 stretches are compositionally biased toward pro residues: residues 141–154, 161–174, 182–191, and 204–223; these read FSPP…PVPS, PPEP…PPRP, SIPPPVPSTP, and PPVP…PPFP. A Phosphoserine modification is found at serine 142. A Phosphoserine modification is found at serine 234. The segment covering 238 to 247 has biased composition (low complexity); the sequence is SPLSSSSPFS. Pro residues-rich tracts occupy residues 282 to 298 and 306 to 323; these read VPPP…PSTP and APPP…PLPP. At serine 340 the chain carries Phosphoserine. Threonine 345 is subject to Phosphothreonine. Pro residues predominate over residues 346–371; sequence PPLPSPGRSGPLPPPPSERPPPPVRD. A Phosphoserine modification is found at serine 350. 3 XRSGPXPPXP motif repeats span residues 352–361, 374–383, and 410–419; these read GRSGPLPPPP and PRSGPRPPLP. Positions 413–434 are enriched in pro residues; it reads GPRPPLPPDRPSAGAPPPPPPS. The segment covering 480 to 494 has biased composition (basic and acidic residues); it reads ARNESRSGSNRRERG.

Belongs to the verprolin family. As to quaternary structure, binds to WAS, profilin and actin. Binds to WASL. Interacts with DBNL. Interacts with FNBP1L (via the SH3 domain). Highly expressed in peripheral blood mononuclear cells, spleen, placenta, small intestine, colon and thymus. Lower expression in ovary, heart, brain, lung, liver, skeletal muscle, kidney, pancreas, prostate and testis.

It is found in the cytoplasmic vesicle. The protein localises to the cytoplasm. It localises to the cytoskeleton. Its subcellular location is the cell projection. The protein resides in the ruffle. Functionally, plays a role in the reorganization of the actin cytoskeleton. Contributes with NCK1 and GRB2 in the recruitment and activation of WASL. May participate in regulating the subcellular localization of WASL, resulting in the disassembly of stress fibers in favor of filopodia formation. Plays a role in the formation of cell ruffles. Plays an important role in the intracellular motility of vaccinia virus by functioning as an adapter for recruiting WASL to vaccinia virus. This Homo sapiens (Human) protein is WAS/WASL-interacting protein family member 1 (WIPF1).